Consider the following 185-residue polypeptide: uncharacterized protein (185 aa).

In terms of tissue distribution, component of the acid-insoluble and acid-soluble organic matrix of calcified layers of the shell (at protein level).

The protein localises to the secreted. This is an uncharacterized protein from Lottia gigantea (Giant owl limpet).